Here is a 291-residue protein sequence, read N- to C-terminus: Protease HtpX homolog (291 aa).

2 helical membrane-spanning segments follow: residues 4–24 (IVLFLLTNFAVILVLSISARL) and 38–58 (MGMLLAFAALIGFGGSFISLM). Histidine 144 contributes to the Zn(2+) binding site. The active site involves glutamate 145. Residue histidine 148 coordinates Zn(2+). A run of 2 helical transmembrane segments spans residues 152-172 (GDMVTLTLIQGVVNTFVIFLA) and 199-219 (VSSIAFEIMFGILASIVVMFF). Glutamate 224 contacts Zn(2+).

This sequence belongs to the peptidase M48B family. Zn(2+) is required as a cofactor.

The protein resides in the cell inner membrane. The sequence is that of Protease HtpX homolog from Prosthecochloris aestuarii (strain DSM 271 / SK 413).